An 868-amino-acid polypeptide reads, in one-letter code: Coatomer subunit gamma (868 aa).

Basic residues predominate over residues 1 to 11 (MWRTKRGRTRR). The interval 1-22 (MWRTKRGRTRRRDAGGNPWQNL) is disordered. HEAT repeat units follow at residues 64–101 (REAT…IADD), 287–324 (RELS…LHPP), 326–359 (VNVC…GAES), and 360–396 (SVER…KFPR).

It belongs to the COPG family. In terms of assembly, oligomeric complex that consists of at least the alpha, beta, beta', gamma, delta, epsilon and zeta subunits.

It localises to the cytoplasm. Its subcellular location is the golgi apparatus membrane. It is found in the cytoplasmic vesicle. The protein localises to the COPI-coated vesicle membrane. The protein resides in the endoplasmic reticulum. The coatomer is a cytosolic protein complex that binds to dilysine motifs and reversibly associates with Golgi non-clathrin-coated vesicles, which further mediate biosynthetic protein transport from the ER, via the Golgi up to the trans Golgi network. Coatomer complex is required for budding from Golgi membranes, and is essential for the retrograde Golgi-to-ER transport of dilysine-tagged proteins. The polypeptide is Coatomer subunit gamma (Anopheles gambiae (African malaria mosquito)).